The chain runs to 360 residues: Protein Wnt-2 (360 aa).

The signal sequence occupies residues 1–25 (MNAPLGGIWLWLPLLLTWLSPEVSS). Disulfide bonds link Cys-76-Cys-87, Cys-127-Cys-135, Cys-137-Cys-157, Cys-206-Cys-220, Cys-208-Cys-215, Cys-278-Cys-309, Cys-294-Cys-304, Cys-308-Cys-348, Cys-324-Cys-339, Cys-326-Cys-336, and Cys-331-Cys-332. Ser-212 is lipidated: O-palmitoleoyl serine; by PORCN. N-linked (GlcNAc...) asparagine glycosylation occurs at Asn-295.

It belongs to the Wnt family. Post-translationally, palmitoleoylation is required for efficient binding to frizzled receptors. Depalmitoleoylation leads to Wnt signaling pathway inhibition.

Its subcellular location is the secreted. The protein resides in the extracellular space. It is found in the extracellular matrix. Functionally, ligand for members of the frizzled family of seven transmembrane receptors. Probable developmental protein. May be a signaling molecule which affects the development of discrete regions of tissues. Is likely to signal over only few cell diameters. The protein is Protein Wnt-2 (WNT2) of Carollia perspicillata (Seba's short-tailed bat).